The primary structure comprises 233 residues: MAAGIRNITTTGQIGDGREAAAVDYVLAHAGAGNIDDVLATIDKFAYEKSMLINVGDEKGTLLDAAVRRADPALALELGTYLGYGALRIARAAPEARVYSVELAEANASNARRIWAHAGVDDRVVCVVGTIGDGGRTLDALTEHGFATGTLDFVFLDHDKKAYLPDLQSILDRGWLHPGSIVVADNVRVPGAPKYRAYMRRQQGMSWNTIEHKTHLEYQTLVPDLVLESEYLG.

Residues Val-55, Glu-77, 79–80, and Glu-102 contribute to the S-adenosyl-L-methionine site; that span reads GT. Asp-157 contributes to the a divalent metal cation binding site. Asp-159 contacts S-adenosyl-L-methionine. A divalent metal cation is bound by residues Asp-185 and Asn-186.

This sequence belongs to the class I-like SAM-binding methyltransferase superfamily. Cation-dependent O-methyltransferase family.

Its function is as follows. Specifically methylates an O atom of its substrate. The sequence is that of Probable O-methyltransferase Rv1703c from Mycobacterium tuberculosis (strain ATCC 25618 / H37Rv).